The primary structure comprises 299 residues: Lipoyl synthase 2 (299 aa).

Residues cysteine 43, cysteine 48, cysteine 54, cysteine 69, cysteine 73, cysteine 76, and serine 294 each coordinate [4Fe-4S] cluster. The 229-residue stretch at 55-283 (YAAGTATFLL…GAVARDLGFA (229 aa)) folds into the Radical SAM core domain.

It belongs to the radical SAM superfamily. Lipoyl synthase family. It depends on [4Fe-4S] cluster as a cofactor.

The protein localises to the cytoplasm. The enzyme catalyses [[Fe-S] cluster scaffold protein carrying a second [4Fe-4S](2+) cluster] + N(6)-octanoyl-L-lysyl-[protein] + 2 oxidized [2Fe-2S]-[ferredoxin] + 2 S-adenosyl-L-methionine + 4 H(+) = [[Fe-S] cluster scaffold protein] + N(6)-[(R)-dihydrolipoyl]-L-lysyl-[protein] + 4 Fe(3+) + 2 hydrogen sulfide + 2 5'-deoxyadenosine + 2 L-methionine + 2 reduced [2Fe-2S]-[ferredoxin]. Its pathway is protein modification; protein lipoylation via endogenous pathway; protein N(6)-(lipoyl)lysine from octanoyl-[acyl-carrier-protein]: step 2/2. Its function is as follows. Catalyzes the radical-mediated insertion of two sulfur atoms into the C-6 and C-8 positions of the octanoyl moiety bound to the lipoyl domains of lipoate-dependent enzymes, thereby converting the octanoylated domains into lipoylated derivatives. The protein is Lipoyl synthase 2 of Parasynechococcus marenigrum (strain WH8102).